A 234-amino-acid polypeptide reads, in one-letter code: Chalcone--flavanone isomerase 1 (234 aa).

Substrate-binding residues include Thr50, Asn115, and Ser192.

Belongs to the chalcone isomerase family.

It catalyses the reaction a chalcone = a flavanone.. It participates in secondary metabolite biosynthesis; flavonoid biosynthesis. Catalyzes the intramolecular cyclization of bicyclic chalcones into tricyclic (S)-flavanones. Responsible for the isomerization of 4,2',4',6'-tetrahydroxychalcone (also termed chalcone) into naringenin. In Vitis vinifera (Grape), this protein is Chalcone--flavanone isomerase 1 (CHI1).